A 60-amino-acid chain; its full sequence is Metallothionein-like protein EMB30 (60 aa).

This sequence belongs to the metallothionein superfamily. Type 15 family.

Functionally, metallothioneins have a high content of cysteine residues that bind various heavy metals. This is Metallothionein-like protein EMB30 (EMB30) from Picea glauca (White spruce).